A 428-amino-acid polypeptide reads, in one-letter code: UPF0761 membrane protein Ppha_1623 (428 aa).

The next 6 membrane-spanning stretches (helical) occupy residues 52 to 72, 108 to 128, 148 to 168, 189 to 209, 216 to 233, and 252 to 272; these read LLSI…FVVF, SVPI…ISTV, FTLY…SLAA, LLSF…YMLV, FVHA…FELS, and GALS…IVVL.

This sequence belongs to the UPF0761 family.

It localises to the cell inner membrane. This is UPF0761 membrane protein Ppha_1623 from Pelodictyon phaeoclathratiforme (strain DSM 5477 / BU-1).